The following is a 264-amino-acid chain: MNVHVSPDSLVIAGKTYGSRLLTGTGKFKDLEETRLATEAAGAQIVTVAIRRTNIGQNPGEPNLLDVLPPERYTILPNTAGCYTAEDAVRTCRLARELLDGHNLTKLEVLGDQKSLYPDVVQTLKAAEQLVKDGFEVMVYTSDDPILAKRLEEIGCAAVMPLAAPIGSGLGIQNKYNLLQIIEDAKVPIIVDAGVGTASDAAIAMELGCDGVLMNTAIAGARHPVLMASAMRKAVEAGREAFLAGRIPRKRYASASSPVDGLIG.

K106 acts as the Schiff-base intermediate with DXP in catalysis. 1-deoxy-D-xylulose 5-phosphate contacts are provided by residues G167, 193 to 194 (AG), and 215 to 216 (NT).

It belongs to the ThiG family. Homotetramer. Forms heterodimers with either ThiH or ThiS.

It localises to the cytoplasm. The catalysed reaction is [ThiS sulfur-carrier protein]-C-terminal-Gly-aminoethanethioate + 2-iminoacetate + 1-deoxy-D-xylulose 5-phosphate = [ThiS sulfur-carrier protein]-C-terminal Gly-Gly + 2-[(2R,5Z)-2-carboxy-4-methylthiazol-5(2H)-ylidene]ethyl phosphate + 2 H2O + H(+). It participates in cofactor biosynthesis; thiamine diphosphate biosynthesis. Functionally, catalyzes the rearrangement of 1-deoxy-D-xylulose 5-phosphate (DXP) to produce the thiazole phosphate moiety of thiamine. Sulfur is provided by the thiocarboxylate moiety of the carrier protein ThiS. In vitro, sulfur can be provided by H(2)S. This Stenotrophomonas maltophilia (strain K279a) protein is Thiazole synthase.